A 287-amino-acid polypeptide reads, in one-letter code: GDT1-like protein C17G8.08c (287 aa).

7 consecutive transmembrane segments (helical) span residues 7–27 (WAII…GEGM), 50–70 (LIFS…FIVA), 89–109 (ALFI…LLFP), 112–132 (LTDI…LMEA), 194–214 (VMAT…FVSE), 232–252 (VYGV…LAVI), and 267–287 (MFIG…QGFF).

The protein belongs to the GDT1 family.

It is found in the membrane. The polypeptide is GDT1-like protein C17G8.08c (Schizosaccharomyces pombe (strain 972 / ATCC 24843) (Fission yeast)).